Here is a 66-residue protein sequence, read N- to C-terminus: Large ribosomal subunit protein bL33c (66 aa).

It belongs to the bacterial ribosomal protein bL33 family.

Its subcellular location is the plastid. The chain is Large ribosomal subunit protein bL33c (rpl33) from Epifagus virginiana (Beechdrops).